The sequence spans 259 residues: Pimeloyl-[acyl-carrier protein] methyl ester esterase (259 aa).

Substrate-binding positions include tryptophan 18, 78–79 (SL), and 139–143 (FLALD). Serine 78 acts as the Nucleophile in catalysis. Residues aspartate 203 and histidine 231 contribute to the active site. Residue histidine 231 participates in substrate binding.

It belongs to the AB hydrolase superfamily. Carboxylesterase BioH family. Monomer.

The protein localises to the cytoplasm. The enzyme catalyses 6-carboxyhexanoyl-[ACP] methyl ester + H2O = 6-carboxyhexanoyl-[ACP] + methanol + H(+). It participates in cofactor biosynthesis; biotin biosynthesis. The physiological role of BioH is to remove the methyl group introduced by BioC when the pimeloyl moiety is complete. It allows to synthesize pimeloyl-ACP via the fatty acid synthetic pathway through the hydrolysis of the ester bonds of pimeloyl-ACP esters. The protein is Pimeloyl-[acyl-carrier protein] methyl ester esterase of Stenotrophomonas maltophilia (strain R551-3).